The sequence spans 262 residues: Pyridoxine 5'-phosphate synthase (262 aa).

Asn6 contributes to the 3-amino-2-oxopropyl phosphate binding site. Position 8 to 9 (8 to 9 (DH)) interacts with 1-deoxy-D-xylulose 5-phosphate. A 3-amino-2-oxopropyl phosphate-binding site is contributed by Arg17. The active-site Proton acceptor is His43. The 1-deoxy-D-xylulose 5-phosphate site is built by Arg45 and His50. Glu70 acts as the Proton acceptor in catalysis. Thr102 serves as a coordination point for 1-deoxy-D-xylulose 5-phosphate. His215 (proton donor) is an active-site residue. Residues Gly216 and 237–238 (GH) each bind 3-amino-2-oxopropyl phosphate.

This sequence belongs to the PNP synthase family. Homooctamer; tetramer of dimers.

The protein resides in the cytoplasm. It carries out the reaction 3-amino-2-oxopropyl phosphate + 1-deoxy-D-xylulose 5-phosphate = pyridoxine 5'-phosphate + phosphate + 2 H2O + H(+). It participates in cofactor biosynthesis; pyridoxine 5'-phosphate biosynthesis; pyridoxine 5'-phosphate from D-erythrose 4-phosphate: step 5/5. In terms of biological role, catalyzes the complicated ring closure reaction between the two acyclic compounds 1-deoxy-D-xylulose-5-phosphate (DXP) and 3-amino-2-oxopropyl phosphate (1-amino-acetone-3-phosphate or AAP) to form pyridoxine 5'-phosphate (PNP) and inorganic phosphate. This Helicobacter pylori (strain P12) protein is Pyridoxine 5'-phosphate synthase.